Consider the following 405-residue polypeptide: Glucoside xylosyltransferase 1 (405 aa).

Residues Met-1 to Arg-2 lie on the Cytoplasmic side of the membrane. A helical; Signal-anchor for type II membrane protein membrane pass occupies residues Ile-3 to Phe-23. Residues Ser-24 to Asp-405 are Lumenal-facing. The disordered stretch occupies residues Ser-46–Val-65. 4 N-linked (GlcNAc...) asparagine glycosylation sites follow: Asn-202, Asn-243, Asn-277, and Asn-372.

It belongs to the glycosyltransferase 8 family.

It is found in the membrane. The enzyme catalyses 3-O-(beta-D-glucosyl)-L-seryl-[EGF-like domain protein] + UDP-alpha-D-xylose = 3-O-[alpha-D-xylosyl-(1-&gt;3)-beta-D-glucosyl]-L-seryl-[EGF-like domain protein] + UDP + H(+). In terms of biological role, glycosyltransferase which elongates the O-linked glucose attached to EGF-like repeats in the extracellular domain of Notch proteins by catalyzing the addition of xylose. The chain is Glucoside xylosyltransferase 1 (gxylt1) from Danio rerio (Zebrafish).